A 188-amino-acid chain; its full sequence is Acireductone dioxygenase (188 aa).

The Fe(2+) site is built by H97, H99, E103, and H141. Ni(2+) is bound by residues H97, H99, E103, and H141.

The protein belongs to the acireductone dioxygenase (ARD) family. Monomer. Fe(2+) serves as cofactor. The cofactor is Ni(2+).

The catalysed reaction is 1,2-dihydroxy-5-(methylsulfanyl)pent-1-en-3-one + O2 = 3-(methylsulfanyl)propanoate + CO + formate + 2 H(+). It carries out the reaction 1,2-dihydroxy-5-(methylsulfanyl)pent-1-en-3-one + O2 = 4-methylsulfanyl-2-oxobutanoate + formate + 2 H(+). The protein operates within amino-acid biosynthesis; L-methionine biosynthesis via salvage pathway; L-methionine from S-methyl-5-thio-alpha-D-ribose 1-phosphate: step 5/6. Catalyzes 2 different reactions between oxygen and the acireductone 1,2-dihydroxy-3-keto-5-methylthiopentene (DHK-MTPene) depending upon the metal bound in the active site. Fe-containing acireductone dioxygenase (Fe-ARD) produces formate and 2-keto-4-methylthiobutyrate (KMTB), the alpha-ketoacid precursor of methionine in the methionine recycle pathway. Ni-containing acireductone dioxygenase (Ni-ARD) produces methylthiopropionate, carbon monoxide and formate, and does not lie on the methionine recycle pathway. The protein is Acireductone dioxygenase of Xylella fastidiosa (strain M23).